Here is a 175-residue protein sequence, read N- to C-terminus: MNTDHTKRNLFELYAELIHQQEKWEGLIKAFLSDELRKLDVEHGSKSQLTMTEIHVLSCVGDNEPINVTSIAEKMNTTKATVSRISTKLLGAGFLHRTQLSDNKKEVYFRLTPAGKKLHSLHKYYHQKAEQRFLSFFDRYTEEEILFAERLFRDLVTKWYPSSEEIEGGLPSIFK.

The HTH marR-type domain maps to 10–157 (LFELYAELIH…AERLFRDLVT (148 aa)). Residues 68 to 91 (VTSIAEKMNTTKATVSRISTKLLG) constitute a DNA-binding region (H-T-H motif).

The protein resides in the cytoplasm. This is an uncharacterized protein from Bacillus subtilis (strain 168).